A 232-amino-acid chain; its full sequence is Orotate phosphoribosyltransferase (232 aa).

Residues arginine 107, lysine 108, lysine 111, histidine 113, and 133 to 141 each bind 5-phospho-alpha-D-ribose 1-diphosphate; that span reads EDLTTAGGS. Threonine 137 lines the orotate pocket.

Belongs to the purine/pyrimidine phosphoribosyltransferase family. PyrE subfamily. In terms of assembly, homodimer. Mg(2+) serves as cofactor.

It catalyses the reaction orotidine 5'-phosphate + diphosphate = orotate + 5-phospho-alpha-D-ribose 1-diphosphate. It participates in pyrimidine metabolism; UMP biosynthesis via de novo pathway; UMP from orotate: step 1/2. Its function is as follows. Catalyzes the transfer of a ribosyl phosphate group from 5-phosphoribose 1-diphosphate to orotate, leading to the formation of orotidine monophosphate (OMP). In Sinorhizobium medicae (strain WSM419) (Ensifer medicae), this protein is Orotate phosphoribosyltransferase.